The sequence spans 481 residues: Protein nucleotidyltransferase YdiU (481 aa).

ATP is bound by residues glycine 87, glycine 89, arginine 90, lysine 110, aspartate 122, glycine 123, arginine 173, and arginine 180. Aspartate 249 functions as the Proton acceptor in the catalytic mechanism. Asparagine 250 and aspartate 259 together coordinate Mg(2+). ATP is bound at residue aspartate 259.

This sequence belongs to the SELO family. The cofactor is Mg(2+). Mn(2+) serves as cofactor.

The enzyme catalyses L-seryl-[protein] + ATP = 3-O-(5'-adenylyl)-L-seryl-[protein] + diphosphate. It carries out the reaction L-threonyl-[protein] + ATP = 3-O-(5'-adenylyl)-L-threonyl-[protein] + diphosphate. The catalysed reaction is L-tyrosyl-[protein] + ATP = O-(5'-adenylyl)-L-tyrosyl-[protein] + diphosphate. It catalyses the reaction L-histidyl-[protein] + UTP = N(tele)-(5'-uridylyl)-L-histidyl-[protein] + diphosphate. The enzyme catalyses L-seryl-[protein] + UTP = O-(5'-uridylyl)-L-seryl-[protein] + diphosphate. It carries out the reaction L-tyrosyl-[protein] + UTP = O-(5'-uridylyl)-L-tyrosyl-[protein] + diphosphate. Functionally, nucleotidyltransferase involved in the post-translational modification of proteins. It can catalyze the addition of adenosine monophosphate (AMP) or uridine monophosphate (UMP) to a protein, resulting in modifications known as AMPylation and UMPylation. This is Protein nucleotidyltransferase YdiU from Mycobacterium sp. (strain KMS).